The chain runs to 211 residues: tRNA (guanine-N(7)-)-methyltransferase (211 aa).

Glu-44, Asp-69, Asp-96, and Asp-118 together coordinate S-adenosyl-L-methionine. Asp-118 is a catalytic residue. Residue Lys-122 coordinates substrate. Residues 124–129 form an interaction with RNA region; that stretch reads RHEKRR. Residues Asp-154 and 191–194 contribute to the substrate site; that span reads TEYE.

The protein belongs to the class I-like SAM-binding methyltransferase superfamily. TrmB family.

The catalysed reaction is guanosine(46) in tRNA + S-adenosyl-L-methionine = N(7)-methylguanosine(46) in tRNA + S-adenosyl-L-homocysteine. The protein operates within tRNA modification; N(7)-methylguanine-tRNA biosynthesis. Functionally, catalyzes the formation of N(7)-methylguanine at position 46 (m7G46) in tRNA. The protein is tRNA (guanine-N(7)-)-methyltransferase of Streptococcus equi subsp. zooepidemicus (strain H70).